The following is a 102-amino-acid chain: MIALRLIAVTLVVAMAASTTWARSFNKRANFDPSCAGVYNRELLGRLSRLCDDCYNVFREPKVATECRNNCFYNPVFVQCLEYLIPADLHEEYQAHVQTVGK.

The N-terminal stretch at 1 to 22 (MIALRLIAVTLVVAMAASTTWA) is a signal peptide. Cystine bridges form between cysteine 35-cysteine 71, cysteine 51-cysteine 67, and cysteine 54-cysteine 80. Valine 100 carries the valine amide modification.

The protein belongs to the arthropod CHH/MIH/GIH/VIH hormone family.

The protein resides in the secreted. Hormone found in the sinus gland of isopods and decapods which controls the blood sugar level. Has a secretagogue action over the amylase released from the midgut gland. May act as a stress hormone and may be involved in the control of molting and reproduction. The polypeptide is Crustacean hyperglycemic hormones 3 (CHH3) (Penaeus monodon (Giant tiger prawn)).